Reading from the N-terminus, the 331-residue chain is Cytosolic 5'-nucleotidase 3A (331 aa).

Asp83 serves as the catalytic Nucleophile. 2 residues coordinate Mg(2+): Asp83 and Asp85. The active-site Proton donor is the Asp85. Position 130 (Glu130) interacts with CMP. N(7)-methyl-GMP contacts are provided by Glu130 and Ser151. Residues Ser198–Ala199 and Lys247 each bind substrate. Residue Asp272 participates in Mg(2+) binding.

Belongs to the pyrimidine 5'-nucleotidase family.

Its subcellular location is the cytoplasm. The catalysed reaction is N(7)-methyl-GMP + H2O = N(7)-methylguanosine + phosphate. It carries out the reaction a ribonucleoside 5'-phosphate + H2O = a ribonucleoside + phosphate. Its function is as follows. Nucleotidase which shows specific activity towards cytidine monophosphate (CMP) and 7-methylguanosine monophosphate (m(7)GMP). CMP seems to be the preferred substrate. In Gallus gallus (Chicken), this protein is Cytosolic 5'-nucleotidase 3A (NT5C3A).